The following is a 242-amino-acid chain: Ubiquinone biosynthesis O-methyltransferase (242 aa).

Residues Arg-44, Gly-64, Asp-85, and Met-129 each coordinate S-adenosyl-L-methionine.

The protein belongs to the methyltransferase superfamily. UbiG/COQ3 family.

It carries out the reaction a 3-demethylubiquinol + S-adenosyl-L-methionine = a ubiquinol + S-adenosyl-L-homocysteine + H(+). The catalysed reaction is a 3-(all-trans-polyprenyl)benzene-1,2-diol + S-adenosyl-L-methionine = a 2-methoxy-6-(all-trans-polyprenyl)phenol + S-adenosyl-L-homocysteine + H(+). Its pathway is cofactor biosynthesis; ubiquinone biosynthesis. Functionally, O-methyltransferase that catalyzes the 2 O-methylation steps in the ubiquinone biosynthetic pathway. In Salmonella typhi, this protein is Ubiquinone biosynthesis O-methyltransferase.